The primary structure comprises 240 residues: MNPEEFILELSKHNFELSDKQKQQFKLYFKYLIEVNEHVNLTRITEENEVYLKHFFDSVTPLFTFGEVFKDGATLCDVGAGAGFPSIPLKILNPTLKVTIVDSLAKRLTFLKNLIEKLGLTDVELVHGRAEDVGQNKLYREKFDLVTARAVARMSVLSEYCLPLVKKGGYFIALKGPKAEDELDDGQKALEVLGGKLVKEEELTLPHSKEERTLILVKKIKQTPKKYPRQAGTPRRKPIH.

S-adenosyl-L-methionine contacts are provided by residues glycine 79, phenylalanine 84, 130–131, and arginine 149; that span reads AE.

The protein belongs to the methyltransferase superfamily. RNA methyltransferase RsmG family.

It localises to the cytoplasm. Its function is as follows. Specifically methylates the N7 position of a guanine in 16S rRNA. The protein is Ribosomal RNA small subunit methyltransferase G of Lactobacillus acidophilus (strain ATCC 700396 / NCK56 / N2 / NCFM).